The sequence spans 95 residues: Aspartyl/glutamyl-tRNA(Asn/Gln) amidotransferase subunit C (95 aa).

This sequence belongs to the GatC family. Heterotrimer of A, B and C subunits.

The catalysed reaction is L-glutamyl-tRNA(Gln) + L-glutamine + ATP + H2O = L-glutaminyl-tRNA(Gln) + L-glutamate + ADP + phosphate + H(+). It catalyses the reaction L-aspartyl-tRNA(Asn) + L-glutamine + ATP + H2O = L-asparaginyl-tRNA(Asn) + L-glutamate + ADP + phosphate + 2 H(+). Its function is as follows. Allows the formation of correctly charged Asn-tRNA(Asn) or Gln-tRNA(Gln) through the transamidation of misacylated Asp-tRNA(Asn) or Glu-tRNA(Gln) in organisms which lack either or both of asparaginyl-tRNA or glutaminyl-tRNA synthetases. The reaction takes place in the presence of glutamine and ATP through an activated phospho-Asp-tRNA(Asn) or phospho-Glu-tRNA(Gln). The chain is Aspartyl/glutamyl-tRNA(Asn/Gln) amidotransferase subunit C from Trichlorobacter lovleyi (strain ATCC BAA-1151 / DSM 17278 / SZ) (Geobacter lovleyi).